The sequence spans 235 residues: Large ribosomal subunit protein uL1 (235 aa).

It belongs to the universal ribosomal protein uL1 family. In terms of assembly, part of the 50S ribosomal subunit.

Functionally, binds directly to 23S rRNA. The L1 stalk is quite mobile in the ribosome, and is involved in E site tRNA release. Protein L1 is also a translational repressor protein, it controls the translation of the L11 operon by binding to its mRNA. This is Large ribosomal subunit protein uL1 from Prochlorococcus marinus (strain MIT 9215).